The following is a 422-amino-acid chain: UPF0761 membrane protein XAC0937 (422 aa).

The next 6 helical transmembrane spans lie at 45–65, 102–122, 151–171, 179–199, 213–233, and 247–267; these read VFALVPLAIVVFGVLSAFPAF, FTVAGMVALVASLLITLHSIE, GTMLAAASMAMAAYVFALPLF, LAEFAWRLAPMAVEFVCIVLI, ALPGALLAVILMEIVKWGFGF, and ALSALPILLLWIYLSWVSVLL.

Belongs to the UPF0761 family.

It localises to the cell inner membrane. The protein is UPF0761 membrane protein XAC0937 of Xanthomonas axonopodis pv. citri (strain 306).